Here is a 783-residue protein sequence, read N- to C-terminus: DNA repair and recombination protein RAD54-like (783 aa).

The interval 2 to 9 (RRSLAPSQ) is required for chromatin remodeling, strand pairing activities and coupling of ATPase activity. Position 22 is a phosphothreonine (Thr22). Residues 165 to 340 (EGKRGNFNGC…FSLVNFVNPE (176 aa)) enclose the Helicase ATP-binding domain. Residue 178–185 (DEMGLGKT) coordinates ATP. Positions 291 to 294 (DEGH) match the DEGH box motif. A Helicase C-terminal domain is found at 497-654 (LLDFMLAAIR…NNESSEKHFT (158 aa)). The interval 737–783 (AESKPAAITEDDESEQQQQSPKRTSKNDDNDEDFDPENSAEEQFLGF) is disordered. Acidic residues predominate over residues 765–776 (DNDEDFDPENSA).

Belongs to the SNF2/RAD54 helicase family. In terms of assembly, interacts (via N-terminus) with spn-A/Rad51.

The protein localises to the nucleus. Functionally, involved in mitotic DNA repair and meiotic recombination. Functions in the recombinational DNA repair pathway. Essential for interhomolog gene conversion (GC), but may have a less important role in intersister GC than spn-A/Rad51. In the presence of DNA, spn-A/Rad51 enhances the ATPase activity of okr/Rad54. The sequence is that of DNA repair and recombination protein RAD54-like from Drosophila mojavensis (Fruit fly).